The primary structure comprises 471 residues: Mitochondrial distribution and morphology protein 10 (471 aa).

Residues 429–455 (PSSFSSPSRAANSTPAGGGQSVGGGIS) are disordered. Residues 444 to 455 (AGGGQSVGGGIS) show a composition bias toward gly residues.

It belongs to the MDM10 family. In terms of assembly, component of the ER-mitochondria encounter structure (ERMES) or MDM complex, composed of mmm1, mdm10, mdm12 and mdm34. Associates with the mitochondrial outer membrane sorting assembly machinery SAM(core) complex.

Its subcellular location is the mitochondrion outer membrane. Component of the ERMES/MDM complex, which serves as a molecular tether to connect the endoplasmic reticulum and mitochondria. Components of this complex are involved in the control of mitochondrial shape and protein biogenesis and may function in phospholipid exchange. mdm10 is involved in the late assembly steps of the general translocase of the mitochondrial outer membrane (TOM complex). Functions in the tom40-specific route of the assembly of outer membrane beta-barrel proteins, including the association of tom40 with the receptor tom22 and small TOM proteins. Can associate with the SAM(core) complex as well as the mdm12-mmm1 complex, both involved in late steps of the major beta-barrel assembly pathway, that is responsible for biogenesis of all outer membrane beta-barrel proteins. May act as a switch that shuttles between both complexes and channels precursor proteins into the tom40-specific pathway. Plays a role in mitochondrial morphology and in the inheritance of mitochondria. In Aspergillus fumigatus (strain ATCC MYA-4609 / CBS 101355 / FGSC A1100 / Af293) (Neosartorya fumigata), this protein is Mitochondrial distribution and morphology protein 10 (mdmB).